The following is a 289-amino-acid chain: Ribonuclease HII (289 aa).

The disordered stretch occupies residues 1 to 55; it reads MIRDQAKTPGRAKSAAAAKASPAAKGGGNEAAQSAAGKAAAKPAAKPATSKSGKG. Low complexity-rich tracts occupy residues 7-24 and 31-55; these read KTPGRAKSAAAAKASPAA and AAQSAAGKAAAKPAAKPATSKSGKG. The region spanning 76 to 264 is the RNase H type-2 domain; that stretch reads WPVAGCDEAG…VVAARRKHQP (189 aa). Residues aspartate 82, glutamate 83, and aspartate 173 each contribute to the a divalent metal cation site.

This sequence belongs to the RNase HII family. Mn(2+) serves as cofactor. The cofactor is Mg(2+).

The protein resides in the cytoplasm. It catalyses the reaction Endonucleolytic cleavage to 5'-phosphomonoester.. Endonuclease that specifically degrades the RNA of RNA-DNA hybrids. This is Ribonuclease HII from Bradyrhizobium sp. (strain BTAi1 / ATCC BAA-1182).